We begin with the raw amino-acid sequence, 230 residues long: MAGCLRHFTSVGDDTKKKAWKEEDVEVAHEEEPKNTPHPFIASYSFRGALKWLFSSHKFQIVIICLVILDALFVLVEVLLDLELLAEKVDHIIPEIFHYLSISVLSFFILEIAGKLYAFRLEFFHHKFEVFDAAIVVISFIIDIVYISREDIFNAVGLLILLRLWRVARIVNGIIVSVKTQAEDKIHRLKENQESLLEKVAHLEQQCAQQEQEIVRLQTLLQQHNVFPAS.

Topologically, residues 1-58 (MAGCLRHFTSVGDDTKKKAWKEEDVEVAHEEEPKNTPHPFIASYSFRGALKWLFSSHK) are cytoplasmic. The helical transmembrane segment at 59-79 (FQIVIICLVILDALFVLVEVL) threads the bilayer. Residues 80–96 (LDLELLAEKVDHIIPEI) are Extracellular-facing. A helical transmembrane segment spans residues 97-119 (FHYLSISVLSFFILEIAGKLYAF). At 120–127 (RLEFFHHK) the chain is on the cytoplasmic side. Residues 128–148 (FEVFDAAIVVISFIIDIVYIS) traverse the membrane as a helical segment. The Extracellular portion of the chain corresponds to 149 to 155 (REDIFNA). Residues 156 to 176 (VGLLILLRLWRVARIVNGIIV) traverse the membrane as a helical segment. A coiled-coil region spans residues 177–226 (SVKTQAEDKIHRLKENQESLLEKVAHLEQQCAQQEQEIVRLQTLLQQHNV). The Cytoplasmic segment spans residues 177–230 (SVKTQAEDKIHRLKENQESLLEKVAHLEQQCAQQEQEIVRLQTLLQQHNVFPAS).

Belongs to the hydrogen channel family. In terms of assembly, homodimer.

It is found in the membrane. The protein resides in the cell membrane. Its function is as follows. Mediates the voltage-dependent proton permeability of excitable membranes. Forms a proton-selective channel through which protons may pass in accordance with their electrochemical gradient. The chain is Voltage-gated hydrogen channel 1 (hvcn1) from Xenopus tropicalis (Western clawed frog).